The following is a 212-amino-acid chain: Dephospho-CoA kinase (212 aa).

Positions 3–204 (ILGLTGSIGM…GSRPAAPVGG (202 aa)) constitute a DPCK domain. 11-16 (GMGKST) serves as a coordination point for ATP.

It belongs to the CoaE family.

It localises to the cytoplasm. It catalyses the reaction 3'-dephospho-CoA + ATP = ADP + CoA + H(+). It participates in cofactor biosynthesis; coenzyme A biosynthesis; CoA from (R)-pantothenate: step 5/5. Functionally, catalyzes the phosphorylation of the 3'-hydroxyl group of dephosphocoenzyme A to form coenzyme A. This Paramagnetospirillum magneticum (strain ATCC 700264 / AMB-1) (Magnetospirillum magneticum) protein is Dephospho-CoA kinase.